A 105-amino-acid chain; its full sequence is CRISPR-associated endoribonuclease Cas2 1 (105 aa).

Asp-20 contributes to the Mg(2+) binding site.

This sequence belongs to the CRISPR-associated endoribonuclease Cas2 protein family. In terms of assembly, homodimer, forms a heterotetramer with a Cas1 homodimer. Requires Mg(2+) as cofactor.

Its function is as follows. CRISPR (clustered regularly interspaced short palindromic repeat), is an adaptive immune system that provides protection against mobile genetic elements (viruses, transposable elements and conjugative plasmids). CRISPR clusters contain sequences complementary to antecedent mobile elements and target invading nucleic acids. CRISPR clusters are transcribed and processed into CRISPR RNA (crRNA). Functions as a ssRNA-specific endoribonuclease. Involved in the integration of spacer DNA into the CRISPR cassette. This chain is CRISPR-associated endoribonuclease Cas2 1 (cas21), found in Nitrosomonas europaea (strain ATCC 19718 / CIP 103999 / KCTC 2705 / NBRC 14298).